The sequence spans 1206 residues: Methionine synthase (1206 aa).

The 314-residue stretch at 1-314 folds into the Hcy-binding domain; that stretch reads MRVTAANQHQ…DHIREVAAAV (314 aa). Zn(2+) contacts are provided by Cys233, Cys299, and Cys300. Residues 350 to 609 enclose the Pterin-binding domain; it reads VLMIGERTNA…IPEEQRQAAL (260 aa). In terms of domain architecture, B12-binding N-terminal spans 642–735; the sequence is REAELAKLPL…HMEKSDCDFG (94 aa). The B12-binding domain occupies 740 to 877; that stretch reads KGRIVLATVK…SAKRGEALAP (138 aa). Methylcob(III)alamin is bound by residues 750-754, His753, Ser798, and Ala856; that span reads GDVHD. The disordered stretch occupies residues 873–925; the sequence is EALAPGSPESLAAEADRNKETERKARHERSKRIAVQRKAAEEPVEVPERSDVP. Over residues 886-897 the composition is skewed to basic and acidic residues; sequence EADRNKETERKA. The segment covering 898–907 has biased composition (basic residues); it reads RHERSKRIAV. Residues 907 to 1206 enclose the AdoMet activation domain; sequence VQRKAAEEPV…HHPAAKYFNV (300 aa). The span at 910-924 shows a compositional bias: basic and acidic residues; it reads KAAEEPVEVPERSDV. S-adenosyl-L-methionine contacts are provided by residues Asp954, Arg1149, and 1203-1204; that span reads YF.

This sequence belongs to the vitamin-B12 dependent methionine synthase family. Methylcob(III)alamin is required as a cofactor. Requires Zn(2+) as cofactor.

The catalysed reaction is (6S)-5-methyl-5,6,7,8-tetrahydrofolate + L-homocysteine = (6S)-5,6,7,8-tetrahydrofolate + L-methionine. It participates in amino-acid biosynthesis; L-methionine biosynthesis via de novo pathway; L-methionine from L-homocysteine (MetH route): step 1/1. Catalyzes the transfer of a methyl group from methyl-cobalamin to homocysteine, yielding enzyme-bound cob(I)alamin and methionine. Subsequently, remethylates the cofactor using methyltetrahydrofolate. The polypeptide is Methionine synthase (metH) (Mycobacterium leprae (strain TN)).